Reading from the N-terminus, the 127-residue chain is Large ribosomal subunit protein uL22 (127 aa).

It belongs to the universal ribosomal protein uL22 family. Part of the 50S ribosomal subunit.

Its function is as follows. This protein binds specifically to 23S rRNA; its binding is stimulated by other ribosomal proteins, e.g. L4, L17, and L20. It is important during the early stages of 50S assembly. It makes multiple contacts with different domains of the 23S rRNA in the assembled 50S subunit and ribosome. The globular domain of the protein is located near the polypeptide exit tunnel on the outside of the subunit, while an extended beta-hairpin is found that lines the wall of the exit tunnel in the center of the 70S ribosome. This Methylobacterium sp. (strain 4-46) protein is Large ribosomal subunit protein uL22.